A 480-amino-acid polypeptide reads, in one-letter code: UDP-glycosyltransferase 71C5 (480 aa).

UDP-alpha-D-glucose-binding positions include Ser290, 349-351, 366-374, and 388-391; these read APQ, HCGWNSVQE, and YAEQ.

Belongs to the UDP-glycosyltransferase family.

Functionally, possesses low quercetin 3-O-glucosyltransferase activity in vitro. This is UDP-glycosyltransferase 71C5 (UGT71C5) from Arabidopsis thaliana (Mouse-ear cress).